A 101-amino-acid chain; its full sequence is Ascorbate-specific PTS system EIIB component (101 aa).

The PTS EIIB type-2 domain occupies 3 to 96 (VRILAVCGNG…KLLKVIKEHF (94 aa)). Residue C9 is the Phosphocysteine intermediate of the active site. C9 bears the Phosphocysteine mark.

It is found in the cytoplasm. The catalysed reaction is N(pros)-phospho-L-histidyl-[protein] + L-ascorbate(out) = L-ascorbate 6-phosphate(in) + L-histidyl-[protein]. The phosphoenolpyruvate-dependent sugar phosphotransferase system (sugar PTS), a major carbohydrate active transport system, catalyzes the phosphorylation of incoming sugar substrates concomitantly with their translocation across the cell membrane. The enzyme II UlaABC PTS system is involved in ascorbate transport. This Shigella dysenteriae serotype 1 (strain Sd197) protein is Ascorbate-specific PTS system EIIB component (ulaB).